The chain runs to 101 residues: Cilia- and flagella-associated protein 141 (101 aa).

Microtubule inner protein component of sperm flagellar doublet microtubules. In terms of tissue distribution, expressed in airway epithelial cells.

Its subcellular location is the cytoplasm. It is found in the cytoskeleton. It localises to the cilium axoneme. The protein resides in the flagellum axoneme. In terms of biological role, microtubule inner protein (MIP) part of the dynein-decorated doublet microtubules (DMTs) in cilia axoneme, which is required for motile cilia beating. The polypeptide is Cilia- and flagella-associated protein 141 (Homo sapiens (Human)).